We begin with the raw amino-acid sequence, 459 residues long: Mitochondrial distribution and morphology protein 10 (459 aa).

This sequence belongs to the MDM10 family. As to quaternary structure, component of the ER-mitochondria encounter structure (ERMES) or MDM complex, composed of MMM1, MDM10, MDM12 and MDM34. Associates with the mitochondrial outer membrane sorting assembly machinery SAM(core) complex.

The protein localises to the mitochondrion outer membrane. Component of the ERMES/MDM complex, which serves as a molecular tether to connect the endoplasmic reticulum and mitochondria. Components of this complex are involved in the control of mitochondrial shape and protein biogenesis and may function in phospholipid exchange. MDM10 is involved in the late assembly steps of the general translocase of the mitochondrial outer membrane (TOM complex). Functions in the TOM40-specific route of the assembly of outer membrane beta-barrel proteins, including the association of TOM40 with the receptor TOM22 and small TOM proteins. Can associate with the SAM(core) complex as well as the MDM12-MMM1 complex, both involved in late steps of the major beta-barrel assembly pathway, that is responsible for biogenesis of all outer membrane beta-barrel proteins. May act as a switch that shuttles between both complexes and channels precursor proteins into the TOM40-specific pathway. Plays a role in mitochondrial morphology and in the inheritance of mitochondria. The chain is Mitochondrial distribution and morphology protein 10 from Clavispora lusitaniae (strain ATCC 42720) (Yeast).